The chain runs to 1122 residues: TSET complex member tstF (1122 aa).

The span at 88–126 shows a compositional bias: low complexity; sequence SSSASGINGTNNNNSGSNSSNNNNNNNGSLSNSPNNNNN. 2 disordered regions span residues 88–131 and 178–215; these read SSSA…AFIG and QTLHNRSPNNTIKLSPNSSNNDSLNNNNNNINNNSTNS. A compositionally biased stretch (polar residues) spans 178–190; it reads QTLHNRSPNNTIK. Over residues 191-215 the composition is skewed to low complexity; sequence LSPNSSNNDSLNNNNNNINNNSTNS. WD repeat units follow at residues 298-337, 342-381, and 383-422; these read FENKSPNSVEFFSNSPFVAFGGPDSMIRLWNTEKWEIEKQ, PKGTIVKLKAIEIEGEFLVSGGTDGFVCVWNVKTGSLATQ, and SKVHEIVDLSYDYVTGQVMALTQDRHIMIYDLNTLKEVSK. A disordered region spans residues 731–775; that stretch reads NGSVGGSSSNNSANSNNSNNNNNNNNNNSNNSNNNNNSSQPILEP.

In terms of assembly, component of the TSET complex, a heterohexamer composed of tstA, tstB, tstC, tstD, tstE and tstF, which may act in plasma membrane turnover. tstA, tstB, tstC and tstD are likely to be the core complex members with tstE and tstF acting as associated scaffold proteins.

The polypeptide is TSET complex member tstF (Dictyostelium discoideum (Social amoeba)).